Consider the following 784-residue polypeptide: MGDTTSSEDVPENKQKSLKFEIIDARMKIFKDIVKSKSSESVKEEQIYQKSLEFFDEDLKSSEESVSNEEIKTGSEKELEPLNVFDIILIMLQQLPERKKPIGSLLSKWILMNFMNWMQDKQSIMEQQMTEYYQKKAGLACVKEPKNEEYLLQIFKISKEFVIDLRKSKVQEYLENQKFKEAAEIVMKHEVVDDYSFEQITLPLILCDKVQIVDELLKISKKLQKSYISFLDQFVAETDETVNAFFEPYKEKGMVTINLSRFHGKSLTIFMQKFFNGQVKQFKFDLEERRDAPKFVANMKRKALKYFVGKRFEDHEMNDELFCEHMKSTLPECTDKTIVQFLILLWDTCIYERRIEALFWATYSNIDRNSKYMPPDLKEELENPTTEMKNGLEKLQALRTTKNCQEEDEQLYVFEEQKKYPIRIVQNEQDLEILLSELGELEEGMYIGYDSEFKPYHLIDVSTSRLAIIQLFFKDKAWLINCVAIDNLASRDDVWIRLYKGLFESNKFSIVGFDIRQDIEAMFTVPSINKNFKIENIQNVICVKSLAENVNALSMDILNLSTKTSKLSVLADHLVGLKMDKSEQCGNWQCRPLRRNQIIYAVMDAVAVFEVFQKIVEVVRKHELDAEKLLVESHMITVKKEKVRRDCKNISLIPWNEFYQIIHTHRNPEKPLQKPSELKIVVDTMVLGLGKNLRLLGFDVYIPRDVTELKEFLRKMDKMEESEQRLVISVPSRSYEMLKSDNPNAKFVLIPNIYEKVPIDLVCSFFDFFNIDISPDQDYIKLNC.

The 198-residue stretch at 422–619 folds into the 3'-5' exonuclease domain; sequence IRIVQNEQDL…EVFQKIVEVV (198 aa).

This is an uncharacterized protein from Caenorhabditis elegans.